A 482-amino-acid chain; its full sequence is Lipoamide acyltransferase component of branched-chain alpha-keto acid dehydrogenase complex, mitochondrial (482 aa).

A mitochondrion-targeting transit peptide spans 1–61 (MAAARVLRTW…HSLRTAAVLQ (61 aa)). One can recognise a Lipoyl-binding domain in the interval 64 to 139 (VVQFKLSDIG…YVGKPLIDIE (76 aa)). N6-lipoyllysine is present on lysine 105. The residue at position 133 (lysine 133) is an N6-succinyllysine. Positions 145 to 160 (DSEEDVVETPAVSHDE) are critical for association with PPM1K. The Peripheral subunit-binding (PSBD) domain maps to 172-209 (LATPAVRRLAMENNIKLSEVVGSGKDGRILKEDILSFL). Lysine 196 bears the N6-acetyllysine; alternate mark. Lysine 196 carries the post-translational modification N6-succinyllysine; alternate. Residue lysine 202 is modified to N6-acetyllysine. The interval 217-252 (LPPSPKSEITPPPPQPKDRTFPTPIAKPPVFTGKDR) is disordered. Pro residues predominate over residues 218-231 (PPSPKSEITPPPPQ). Serine 220 is subject to Phosphoserine. 2 positions are modified to N6-acetyllysine: lysine 243 and lysine 250. Residue lysine 261 is modified to N6-succinyllysine. Lysine 289 is modified (N6-acetyllysine; alternate). At lysine 289 the chain carries N6-succinyllysine; alternate. Residue arginine 291 participates in CoA binding. 2 positions are modified to N6-acetyllysine: lysine 295 and lysine 304. Serine 306, aspartate 349, glutamine 378, serine 399, asparagine 400, serine 403, glycine 424, and isoleucine 426 together coordinate CoA. Lysine 435 carries the N6-acetyllysine modification. An N6-acetyllysine; alternate modification is found at lysine 440. Position 440 is an N6-succinyllysine; alternate (lysine 440). Active-site residues include histidine 452 and aspartate 456.

It belongs to the 2-oxoacid dehydrogenase family. Forms a 24-polypeptide structural core with octahedral symmetry that represents the E2 component of the branched-chain alpha-ketoacid dehydrogenase (BCKDH) complex. The BCKDH complex is composed of three major building blocks E1, E2 and E3. It is organized around E2, a 24-meric cubic core composed of DBT, to which are associated 6 to 12 copies of E1, and approximately 6 copies of the dehydrogenase E3, a DLD dimer. Interacts with PPM1K with a 24:1 stoichiometry; the N-terminal region (residues 49-61) of PPM1K and C-terminal linker of the lipoyl domain of DBT/E2 (residues 145-160) are critical for this interaction whereas the lipoyl prosthetic group is dispensable. This interaction requires colocalization in mitochondria. PPM1K competes with BCKDK for binding to DBT; this interaction is modulated by branched-chain alpha-keto acids (BCKAs). At steady state, BCKDH holoenzyme preferentially binds BCKDK and BCKDHA is phosphorylated. In response to high levels of BCKAs, BCKDK is replaced by PPM1K leading to BCKDHA dephosphorylation. (R)-lipoate is required as a cofactor.

It is found in the mitochondrion matrix. It catalyses the reaction N(6)-[(R)-dihydrolipoyl]-L-lysyl-[protein] + 2-methylpropanoyl-CoA = N(6)-[(R)-S(8)-2-methylpropanoyldihydrolipoyl]-L-lysyl-[protein] + CoA. Functionally, the branched-chain alpha-keto dehydrogenase complex catalyzes the overall conversion of alpha-keto acids to acyl-CoA and CO(2). It contains multiple copies of three enzymatic components: branched-chain alpha-keto acid decarboxylase (E1), lipoamide acyltransferase (E2) and lipoamide dehydrogenase (E3). Within this complex, the catalytic function of this enzyme is to accept, and to transfer to coenzyme A, acyl groups that are generated by the branched-chain alpha-keto acid decarboxylase component. In Mus musculus (Mouse), this protein is Lipoamide acyltransferase component of branched-chain alpha-keto acid dehydrogenase complex, mitochondrial (Dbt).